The sequence spans 330 residues: Cyclic AMP receptor-like protein E (330 aa).

Residues 1–10 (MLSLSSYVLN) lie on the Extracellular side of the membrane. A helical transmembrane segment spans residues 11-31 (LVGSILCLIGCLFIIGHFFWI). Residues 32 to 40 (PLLRTSLSR) are Cytoplasmic-facing. The chain crosses the membrane as a helical span at residues 41–61 (IIIYPTFILLLYDMVSFPSFI). The Extracellular portion of the chain corresponds to 62 to 85 (SKTADLYIERSTIICNFQEAIIQY). Residues 86–106 (LILSNFIWSVCISVNLLYLCF) form a helical membrane-spanning segment. At 107–116 (SPNKNLKKNE) the chain is on the cytoplasmic side. Residues 117 to 137 (LLYHLCSWGIPLIVVVITKIP) form a helical membrane-spanning segment. Over 138–156 (NMISDNGNQCRFKSPNYIK) the chain is Extracellular. A helical transmembrane segment spans residues 157–177 (FYLETILFIAFMLFNFIVAFI). Topologically, residues 178–213 (TIKHIISGNLRESETTTTSVLFVNEKKITTKKIVWR) are cytoplasmic. A helical transmembrane segment spans residues 214–234 (LLLYPSILSICYIMTLVLSIY). Topologically, residues 235–274 (QFSTESYGSGGAYANSINNKRNDKNTESGNSNNNNNSYIE) are extracellular. A glycan (N-linked (GlcNAc...) asparagine) is linked at N269. Residues 275 to 295 (ILLYISKAIFLLQGFFNALVY) form a helical membrane-spanning segment. The Cytoplasmic segment spans residues 296–330 (LRSSKLRDRYKKITIFRKIFWRDEADYQSINDGFN).

This sequence belongs to the G-protein coupled receptor 5 family.

Its subcellular location is the membrane. Its function is as follows. Receptor for cAMP. This Dictyostelium discoideum (Social amoeba) protein is Cyclic AMP receptor-like protein E (crlE).